Consider the following 362-residue polypeptide: Sphingosine 1-phosphate receptor 1 (362 aa).

Topologically, residues 1–25 are extracellular; sequence MDDLIARHYNFTGKFRKVHKDPGLK. Asn10 carries an N-linked (GlcNAc...) asparagine glycan. Residues 26 to 47 form a helical membrane-spanning segment; that stretch reads ADSVVFIIVCCFIILENVLVLL. At 48-61 the chain is on the cytoplasmic side; sequence TIWRTKKFHKPMYY. Residues 62–83 traverse the membrane as a helical segment; the sequence is FIGNLALSDLLAGVVYTANILL. Over 84–95 the chain is Extracellular; sequence SGANTYKLTPTQ. A helical membrane pass occupies residues 96 to 117; it reads WFFREGSMFVALAASVFSLLAI. 99-100 serves as a coordination point for sphing-4-enine 1-phosphate; it reads RE. The Cytoplasmic segment spans residues 118 to 139; it reads AIERHLTMLKMKLHNNGKTCRV. A helical membrane pass occupies residues 140–161; that stretch reads FMLISTVWFIAAILGGLPVMGW. Topologically, residues 162–175 are extracellular; it reads NCIDSMNNCSTVLP. Cys163 and Cys170 form a disulfide bridge. N-linked (GlcNAc...) asparagine glycosylation is present at Asn169. The helical transmembrane segment at 176–203 threads the bilayer; sequence LYHKAYILFCTTVFSVILMAIVILYARI. Residues 204–238 lie on the Cytoplasmic side of the membrane; sequence YALVRTRSRKLVFRKVANGRGSNKSSEKSMALLKT. Residues 239–259 form a helical membrane-spanning segment; it reads VIIVLSCFIACWAPLFILLLL. 246–250 is a sphing-4-enine 1-phosphate binding site; the sequence is FIACW. At 260–270 the chain is on the extracellular side; sequence DVACQTLTCSI. The cysteines at positions 263 and 268 are disulfide-linked. A helical transmembrane segment spans residues 271-291; it reads LYKAEWFLALAVLNSAMNPLI. Topologically, residues 292–362 are cytoplasmic; sequence YTLTSNEMRR…VSSGNITSSS (71 aa). A lipid anchor (S-palmitoyl cysteine) is attached at Cys309. A disordered region spans residues 328–362; the sequence is FSRSKSDNSSHPNKDEPEYSPRETIVSSGNITSSS. The span at 329 to 348 shows a compositional bias: basic and acidic residues; the sequence is SRSKSDNSSHPNKDEPEYSP. Positions 352–362 are enriched in polar residues; sequence IVSSGNITSSS.

This sequence belongs to the G-protein coupled receptor 1 family.

The protein resides in the cell membrane. Its function is as follows. G-protein coupled receptor for the bioactive lysosphingolipid sphingosine 1-phosphate (S1P) that seems to be coupled to the G(i) subclass of heteromeric G proteins. Signaling leads to the activation of RAC1, SRC, PTK2/FAK1 and MAP kinases. Plays an important role in cell migration, probably via its role in the reorganization of the actin cytoskeleton and the formation of lamellipodia in response to stimuli that increase the activity of the sphingosine kinase SPHK1. Required for normal chemotaxis toward sphingosine 1-phosphate. This Danio rerio (Zebrafish) protein is Sphingosine 1-phosphate receptor 1 (s1pr1).